The chain runs to 68 residues: uncharacterized protein (68 aa).

Residues 1–27 form a disordered region; the sequence is MNEFEKWIEGRYEPHEQKQKEHEDTMG.

This is an uncharacterized protein from Bacillus subtilis (strain 168).